A 787-amino-acid polypeptide reads, in one-letter code: Penicillin-binding protein 1A (787 aa).

Residues 1 to 6 (MYKSLF) are Cytoplasmic-facing. Residues 7 to 27 (LCLKIFAVLILIGCSVTAYII) traverse the membrane as a helical; Signal-anchor for type II membrane protein segment. The Periplasmic portion of the chain corresponds to 28–787 (YHYSHDLPDY…GMLDQSQEIY (760 aa)). The interval 49-220 (TRIYSRDGKL…SELNPDKNYS (172 aa)) is transglycosylase. The Proton donor; for transglycosylase activity role is filled by Glu-87. The transpeptidase stretch occupies residues 398–711 (DVIVVEPIKD…SNVVLPIFID (314 aa)). The active-site Acyl-ester intermediate; for transpeptidase activity is the Ser-457.

The protein in the N-terminal section; belongs to the glycosyltransferase 51 family. This sequence in the C-terminal section; belongs to the transpeptidase family.

The protein localises to the cell inner membrane. The catalysed reaction is [GlcNAc-(1-&gt;4)-Mur2Ac(oyl-L-Ala-gamma-D-Glu-L-Lys-D-Ala-D-Ala)](n)-di-trans,octa-cis-undecaprenyl diphosphate + beta-D-GlcNAc-(1-&gt;4)-Mur2Ac(oyl-L-Ala-gamma-D-Glu-L-Lys-D-Ala-D-Ala)-di-trans,octa-cis-undecaprenyl diphosphate = [GlcNAc-(1-&gt;4)-Mur2Ac(oyl-L-Ala-gamma-D-Glu-L-Lys-D-Ala-D-Ala)](n+1)-di-trans,octa-cis-undecaprenyl diphosphate + di-trans,octa-cis-undecaprenyl diphosphate + H(+). The enzyme catalyses Preferential cleavage: (Ac)2-L-Lys-D-Ala-|-D-Ala. Also transpeptidation of peptidyl-alanyl moieties that are N-acyl substituents of D-alanine.. The protein operates within cell wall biogenesis; peptidoglycan biosynthesis. In terms of biological role, cell wall formation. Synthesis of cross-linked peptidoglycan from the lipid intermediates. The enzyme has a penicillin-insensitive transglycosylase N-terminal domain (formation of linear glycan strands) and a penicillin-sensitive transpeptidase C-terminal domain (cross-linking of the peptide subunits). This chain is Penicillin-binding protein 1A (mrcA), found in Rickettsia prowazekii (strain Madrid E).